The sequence spans 388 residues: Mannitol-1-phosphate 5-dehydrogenase (388 aa).

5-16 (AVHFGGGNIGRG) is a binding site for NAD(+). K213 is an active-site residue.

This sequence belongs to the mannitol dehydrogenase family. Monomer.

It carries out the reaction D-mannitol 1-phosphate + NAD(+) = beta-D-fructose 6-phosphate + NADH + H(+). Catalyzes the NAD(H)-dependent interconversion of D-fructose 6-phosphate and D-mannitol 1-phosphate in the mannitol metabolic pathway. This is Mannitol-1-phosphate 5-dehydrogenase from Coccidioides immitis (strain RS) (Valley fever fungus).